Reading from the N-terminus, the 188-residue chain is Probable thiol:disulfide interchange protein DsbE-2 (188 aa).

The Cytoplasmic segment spans residues 1-11 (MSMLHQQKRKN). A helical transmembrane segment spans residues 12 to 32 (HFVFLPLVILLAVCALLFIGL). At 33 to 188 (QQDPQKIASA…KLEAENAKVR (156 aa)) the chain is on the periplasmic side. The Thioredoxin domain maps to 42 to 179 (ALIGKPVPTF…QEMFIPEWQK (138 aa)). Residues Cys82 and Cys85 are joined by a disulfide bond.

It belongs to the thioredoxin family. DsbE subfamily.

Its subcellular location is the cell inner membrane. Functionally, could be involved in disulfide bond formation. Could catalyzes a late, reductive step in the assembly of periplasmic NrfA c-type cytochrome, probably the reduction of disulfide bonds of the apocytochrome c to allow covalent linkage with the heme. Possible subunit of a heme lyase. The protein is Probable thiol:disulfide interchange protein DsbE-2 (nrfX) of Pasteurella multocida (strain Pm70).